Reading from the N-terminus, the 82-residue chain is Translational regulator CsrA (82 aa).

Belongs to the CsrA/RsmA family. As to quaternary structure, homodimer; the beta-strands of each monomer intercalate to form a hydrophobic core while the alpha-helices form wings that extend away from the core. Each of the alpha-helical wings interacts with an FliW monomer, yielding a FliW-CsrA(2)-FliW complex.

The protein resides in the cytoplasm. Its function is as follows. A translational regulator that binds mRNA to regulate translation initiation and/or mRNA stability. Usually binds in the 5'-UTR at or near the Shine-Dalgarno sequence preventing ribosome-binding, thus repressing translation. Its main target seems to be the major flagellin gene, while its function is anatagonized by FliW. The polypeptide is Translational regulator CsrA (Geobacillus thermodenitrificans (strain NG80-2)).